A 308-amino-acid chain; its full sequence is Methionyl-tRNA formyltransferase (308 aa).

109 to 112 (SLLP) provides a ligand contact to (6S)-5,6,7,8-tetrahydrofolate.

The protein belongs to the Fmt family.

The enzyme catalyses L-methionyl-tRNA(fMet) + (6R)-10-formyltetrahydrofolate = N-formyl-L-methionyl-tRNA(fMet) + (6S)-5,6,7,8-tetrahydrofolate + H(+). Its function is as follows. Attaches a formyl group to the free amino group of methionyl-tRNA(fMet). The formyl group appears to play a dual role in the initiator identity of N-formylmethionyl-tRNA by promoting its recognition by IF2 and preventing the misappropriation of this tRNA by the elongation apparatus. The protein is Methionyl-tRNA formyltransferase of Phenylobacterium zucineum (strain HLK1).